Consider the following 360-residue polypeptide: Histidinol-phosphate aminotransferase (360 aa).

Position 219 is an N6-(pyridoxal phosphate)lysine (K219).

It belongs to the class-II pyridoxal-phosphate-dependent aminotransferase family. Histidinol-phosphate aminotransferase subfamily. Homodimer. Pyridoxal 5'-phosphate is required as a cofactor.

The catalysed reaction is L-histidinol phosphate + 2-oxoglutarate = 3-(imidazol-4-yl)-2-oxopropyl phosphate + L-glutamate. The protein operates within amino-acid biosynthesis; L-histidine biosynthesis; L-histidine from 5-phospho-alpha-D-ribose 1-diphosphate: step 7/9. The chain is Histidinol-phosphate aminotransferase from Jannaschia sp. (strain CCS1).